A 401-amino-acid chain; its full sequence is ATP phosphoribosyltransferase regulatory subunit (401 aa).

The interval 373–401 (PGQQGGAAAQGCDRRLQQDDGGGWVTRPL) is disordered. A compositionally biased stretch (gly residues) spans 392 to 401 (DGGGWVTRPL).

It belongs to the class-II aminoacyl-tRNA synthetase family. HisZ subfamily. Heteromultimer composed of HisG and HisZ subunits.

It localises to the cytoplasm. Its pathway is amino-acid biosynthesis; L-histidine biosynthesis; L-histidine from 5-phospho-alpha-D-ribose 1-diphosphate: step 1/9. Its function is as follows. Required for the first step of histidine biosynthesis. May allow the feedback regulation of ATP phosphoribosyltransferase activity by histidine. The chain is ATP phosphoribosyltransferase regulatory subunit from Alkalilimnicola ehrlichii (strain ATCC BAA-1101 / DSM 17681 / MLHE-1).